The primary structure comprises 375 residues: Growth/differentiation factor 8 (375 aa).

Positions 1–23 (MQKLAVYVYIYLFVQISVDPVAL) are cleaved as a signal peptide. The propeptide occupies 24–266 (DGSSQPTENT…VTDTPKRSRR (243 aa)). N71 is a glycosylation site (N-linked (GlcNAc...) asparagine). 4 cysteine pairs are disulfide-bonded: C272–C282, C281–C340, C309–C372, and C313–C374.

This sequence belongs to the TGF-beta family. In terms of assembly, homodimer; disulfide-linked.

It is found in the secreted. In terms of biological role, acts specifically as a negative regulator of skeletal muscle growth. The sequence is that of Growth/differentiation factor 8 (MSTN) from Excalfactoria chinensis (Blue-breasted quail).